A 251-amino-acid polypeptide reads, in one-letter code: 2,3-bisphosphoglycerate-dependent phosphoglycerate mutase (251 aa).

Substrate is bound by residues 11–18 (RHGESDWN), 24–25 (TG), Arg-63, 90–93 (ERHY), Lys-101, 117–118 (RR), and 184–185 (GN). His-12 functions as the Tele-phosphohistidine intermediate in the catalytic mechanism. Residue Glu-90 is the Proton donor/acceptor of the active site.

It belongs to the phosphoglycerate mutase family. BPG-dependent PGAM subfamily.

It carries out the reaction (2R)-2-phosphoglycerate = (2R)-3-phosphoglycerate. It functions in the pathway carbohydrate degradation; glycolysis; pyruvate from D-glyceraldehyde 3-phosphate: step 3/5. Functionally, catalyzes the interconversion of 2-phosphoglycerate and 3-phosphoglycerate. The chain is 2,3-bisphosphoglycerate-dependent phosphoglycerate mutase from Mycobacterium ulcerans (strain Agy99).